Reading from the N-terminus, the 354-residue chain is MTDLKNDRYLRALLRQPVDITPVWMMRQAGRYLPEYKATRAQAGDFMSLCKNAELACEVTLQPLRRYALDAAILFSDILTIPDAMGLGLYFEAGEGPRFHSPITSHADVVKLPVPDPEQELGYVMNAVRTIRKNLAGEVPLIGFSGSPWTLATYMVEGGSSKAFTVIKKMMFAEPKTLHLLLDKLADSVILYLNAQIRAGAQAVMVFDTWGGALSGRDYKEFSLHYMHKIVDSLQRENEGRRVPVTLFTKGGGQWLEAMAETGCDALGLDWTSDIADARRRVGDKVALQGNMDPSMLYADPARIEQEVASILAGFGQGNGHVFNLGHGIHQDVPPEHAGVFVEAVHRLSRAYHA.

Substrate contacts are provided by residues 27–31 (RQAGR), aspartate 77, tyrosine 154, threonine 209, and histidine 327.

This sequence belongs to the uroporphyrinogen decarboxylase family. Homodimer.

The protein resides in the cytoplasm. It carries out the reaction uroporphyrinogen III + 4 H(+) = coproporphyrinogen III + 4 CO2. It functions in the pathway porphyrin-containing compound metabolism; protoporphyrin-IX biosynthesis; coproporphyrinogen-III from 5-aminolevulinate: step 4/4. Catalyzes the decarboxylation of four acetate groups of uroporphyrinogen-III to yield coproporphyrinogen-III. This is Uroporphyrinogen decarboxylase from Pectobacterium atrosepticum (strain SCRI 1043 / ATCC BAA-672) (Erwinia carotovora subsp. atroseptica).